The primary structure comprises 64 residues: Disintegrin lebein-1-beta (64 aa).

A Disintegrin domain is found at 1–64 (NSGNPCCDPV…SDCPRNPYKD (64 aa)). Cystine bridges form between Cys-6–Cys-29, Cys-20–Cys-26, Cys-25–Cys-50, and Cys-38–Cys-57. The Cell attachment site signature appears at 42 to 44 (RGD).

It belongs to the disintegrin family. Dimeric disintegrin subfamily. In terms of assembly, heterodimer with subunit alpha; disulfide-linked. As to expression, expressed by the venom gland.

The protein resides in the secreted. Strongly inhibits ADP-induced platelet aggregation on human platelet-rich plasma. Also avidly binds to the laminin-binding beta-1 integrins (alpha-3/beta-1, alpha-6/beta-1, and alpha-7/beta-1) in an RGD-independent manner. The protein is Disintegrin lebein-1-beta of Macrovipera lebetinus (Levantine viper).